Consider the following 453-residue polypeptide: Chromosomal replication initiator protein DnaA (453 aa).

The interval 1–75 (MSENMEELWS…SLKKISGKQL (75 aa)) is domain I, interacts with DnaA modulators. The interval 75-114 (LKIKFLLPGEKIKMEEQNNENEEKPESTSKKSSQGSEHTT) is domain II. A compositionally biased stretch (basic and acidic residues) spans 87–103 (KMEEQNNENEEKPESTS). Residues 87 to 112 (KMEEQNNENEEKPESTSKKSSQGSEH) are disordered. The domain III, AAA+ region stretch occupies residues 115–331 (WLNPKYTFDT…GGLIRVIAYS (217 aa)). Residues G159, G161, K162, and T163 each contribute to the ATP site. A domain IV, binds dsDNA region spans residues 332 to 453 (SMANKKITKE…DEIKNLLHGD (122 aa)).

The protein belongs to the DnaA family. Oligomerizes as a right-handed, spiral filament on DNA at oriC.

Its subcellular location is the cytoplasm. Functionally, plays an essential role in the initiation and regulation of chromosomal replication. ATP-DnaA binds to the origin of replication (oriC) to initiate formation of the DNA replication initiation complex once per cell cycle. Binds the DnaA box (a 9 base pair repeat at the origin) and separates the double-stranded (ds)DNA. Forms a right-handed helical filament on oriC DNA; dsDNA binds to the exterior of the filament while single-stranded (ss)DNA is stabiized in the filament's interior. The ATP-DnaA-oriC complex binds and stabilizes one strand of the AT-rich DNA unwinding element (DUE), permitting loading of DNA polymerase. After initiation quickly degrades to an ADP-DnaA complex that is not apt for DNA replication. Binds acidic phospholipids. The sequence is that of Chromosomal replication initiator protein DnaA from Natranaerobius thermophilus (strain ATCC BAA-1301 / DSM 18059 / JW/NM-WN-LF).